Reading from the N-terminus, the 351-residue chain is Ribosomal RNA small subunit methyltransferase H (351 aa).

S-adenosyl-L-methionine contacts are provided by residues Gly48 to Tyr50, Asp67, Phe94, Asp115, and Gln122. Positions Ala274 to Arg351 are disordered.

This sequence belongs to the methyltransferase superfamily. RsmH family.

The protein localises to the cytoplasm. The catalysed reaction is cytidine(1402) in 16S rRNA + S-adenosyl-L-methionine = N(4)-methylcytidine(1402) in 16S rRNA + S-adenosyl-L-homocysteine + H(+). In terms of biological role, specifically methylates the N4 position of cytidine in position 1402 (C1402) of 16S rRNA. This is Ribosomal RNA small subunit methyltransferase H from Methylorubrum extorquens (strain PA1) (Methylobacterium extorquens).